Reading from the N-terminus, the 633-residue chain is MHGLLLAGLLALPMNVLAHPAEHHASNVLSRRGVDIDSFRLPLKAKYMDNEAAAEKIQALSFTKDDDYVSTATKLVKSTFPKSTFRVVDDHYIGTNGIGHVHFKQTAHGLDIDNSDFNVNIDRDGKVFSFGNSFFTGEIPKENPMVKRAFSDPVKALKGAVKALSLPVKSDNAKAKNVAGKETVEFMGTSGALSAPKAKLVYLQKDDGTLALTWRVETDVGENWLLSYVDANNSETVHNVVDYVASAEYKVFAWGLNDPTEGNPTSIRDPWTDASPYTWNSDGNTKYPTTRGNNAIAQDNPTGGSQYLNNYRPQSPNLIFSYPWSATATPPSSYKDFSITQLFYTTNRFHDLLYSFGFNEAAGNFQVNNGNKGGRGNDFAIVNAQDGSGTNNANFATPPDGQPGRMRMYNWTTARPNRDGCLEAGIVIHEYAHGLSNRLCGGPANSACLNALESGGMGEGWGDFYATAIRLKPRDTKNTNYSMGAWAANNPKGIRAYLYSTSLQTNPYMYTSVNSLREVHQIGTVWASMLYELMWALIEAHGNTYSANPVFRNGVPQDGRHLAMKLVMDGMALQPCNPNFVQARDAIIDADRALTNSANKCTIWKAFAKRGLGYGAKYDSRNRTGSNQLPPGC.

The first 18 residues, 1-18, serve as a signal peptide directing secretion; that stretch reads MHGLLLAGLLALPMNVLA. The propeptide occupies 19–246; the sequence is HPAEHHASNV…VHNVVDYVAS (228 aa). N-linked (GlcNAc...) asparagine glycans are attached at residues Asn232 and Asn410. A Zn(2+)-binding site is contributed by His429. Residue Glu430 is part of the active site. Residue His433 coordinates Zn(2+). N-linked (GlcNAc...) asparagine glycans are attached at residues Asn480 and Asn622.

It belongs to the peptidase M36 family. Zn(2+) is required as a cofactor.

The protein localises to the secreted. Functionally, secreted metalloproteinase that allows assimilation of proteinaceous substrates and probably acts as a virulence factor. The chain is Extracellular metalloproteinase 3 (MEP3) from Arthroderma gypseum (strain ATCC MYA-4604 / CBS 118893) (Microsporum gypseum).